We begin with the raw amino-acid sequence, 342 residues long: tRNA N6-adenosine threonylcarbamoyltransferase (342 aa).

Residues His-112 and His-116 each contribute to the Fe cation site. Residues Leu-134 to Gly-138, Asp-167, Gly-180, and Asn-280 each bind substrate. Asp-308 contacts Fe cation.

The protein belongs to the KAE1 / TsaD family. Fe(2+) serves as cofactor.

The protein localises to the cytoplasm. It carries out the reaction L-threonylcarbamoyladenylate + adenosine(37) in tRNA = N(6)-L-threonylcarbamoyladenosine(37) in tRNA + AMP + H(+). Functionally, required for the formation of a threonylcarbamoyl group on adenosine at position 37 (t(6)A37) in tRNAs that read codons beginning with adenine. Is involved in the transfer of the threonylcarbamoyl moiety of threonylcarbamoyl-AMP (TC-AMP) to the N6 group of A37, together with TsaE and TsaB. TsaD likely plays a direct catalytic role in this reaction. This chain is tRNA N6-adenosine threonylcarbamoyltransferase, found in Rickettsia canadensis (strain McKiel).